A 510-amino-acid polypeptide reads, in one-letter code: Lysine--tRNA ligase (510 aa).

Mg(2+)-binding residues include E420 and E427.

This sequence belongs to the class-II aminoacyl-tRNA synthetase family. Homodimer. The cofactor is Mg(2+).

Its subcellular location is the cytoplasm. It catalyses the reaction tRNA(Lys) + L-lysine + ATP = L-lysyl-tRNA(Lys) + AMP + diphosphate. The polypeptide is Lysine--tRNA ligase (Vibrio campbellii (strain ATCC BAA-1116)).